The chain runs to 213 residues: Kiwellin (213 aa).

An N-terminal signal peptide occupies residues 1-24 (MAQLALLLLSLFLTLISLAPPGAS). Disulfide bonds link Cys-28–Cys-60, Cys-32–Cys-44, and Cys-38–Cys-49. 4-hydroxyproline is present on residues Pro-65 and Pro-67. Cystine bridges form between Cys-72–Cys-90, Cys-80–Cys-172, Cys-119–Cys-144, and Cys-166–Cys-172. The disordered stretch occupies residues 91–121 (SPPVTSSTPAKLTNNDFSEGGDDGGPSECDE). Residues 93–107 (PVTSSTPAKLTNNDF) show a composition bias toward polar residues.

This sequence belongs to the kiwellin family. In terms of processing, undergoes proteolytic cleavage by actinidin to produce kissper and KiTH. Three forms of KiTH are produced by cleavage at different sites, the main form produced in vivo is KiTH-1.

The protein resides in the secreted. Functionally, pH-dependent, voltage-gated and anion-selective pore-forming peptide. The protein is Kiwellin of Actinidia deliciosa (Kiwi).